A 271-amino-acid chain; its full sequence is Acyl-[acyl-carrier-protein]--UDP-N-acetylglucosamine O-acyltransferase (271 aa).

This sequence belongs to the transferase hexapeptide repeat family. LpxA subfamily. As to quaternary structure, homotrimer.

It localises to the cytoplasm. The catalysed reaction is a (3R)-hydroxyacyl-[ACP] + UDP-N-acetyl-alpha-D-glucosamine = a UDP-3-O-[(3R)-3-hydroxyacyl]-N-acetyl-alpha-D-glucosamine + holo-[ACP]. Its pathway is glycolipid biosynthesis; lipid IV(A) biosynthesis; lipid IV(A) from (3R)-3-hydroxytetradecanoyl-[acyl-carrier-protein] and UDP-N-acetyl-alpha-D-glucosamine: step 1/6. Its function is as follows. Involved in the biosynthesis of lipid A, a phosphorylated glycolipid that anchors the lipopolysaccharide to the outer membrane of the cell. The polypeptide is Acyl-[acyl-carrier-protein]--UDP-N-acetylglucosamine O-acyltransferase (Agrobacterium fabrum (strain C58 / ATCC 33970) (Agrobacterium tumefaciens (strain C58))).